Reading from the N-terminus, the 3620-residue chain is Cubilin (3620 aa).

A signal peptide spans 1-20 (MSSPFLWSLIILLTFAESNG). The propeptide at 21-32 (EAGGFELQRQKR) is removed in mature form. Residues 39–46 (PRMATERG) form an interaction with AMN region. N-linked (GlcNAc...) asparagine glycosylation occurs at N102. Residues 129–165 (DKKVCSSNPCQNGGTCLNLHDSFFCICPSQWKGPLCS) form the EGF-like 1 domain. Disulfide bonds link C133–C144, C138–C153, C155–C164, C171–C187, C181–C196, and C198–C207. The 42-residue stretch at 167–208 (DVNECQIYSGTPLGCQNGATCENTAGSYSCLCSPETHGPQCA) folds into the EGF-like 2; calcium-binding domain. N253 carries an N-linked (GlcNAc...) asparagine glycan. The region spanning 260–301 (DIDECNLQHAPCSPLVQCFNTQGSFYCGACPTGWQGNGYSCQ) is the EGF-like 3; calcium-binding domain. Disulfide bonds link C264/C277, C271/C286, C289/C300, C306/C321, C313/C330, C333/C344, C350/C363, C357/C373, C396/C406, C401/C415, C417/C426, C433/C444, C438/C453, C455/C464, C471/C497, C524/C546, C587/C613, C640/C662, and C705/C730. The region spanning 302 to 345 (DIDECKINNGGCSVVPPVMCVNTLGSYHCQACPPGYQGDGRVCT) is the EGF-like 4; calcium-binding domain. 2 consecutive EGF-like domains span residues 346–382 (VIDI…YTGN) and 392–427 (LSDT…INCT). Residue N425 is glycosylated (N-linked (GlcNAc...) asparagine). In terms of domain architecture, EGF-like 7; calcium-binding spans 429–465 (NINECLSNPCFNGGTCVDGVNAFSCECTRFWTGFLCQ). CUB domains are found at residues 471 to 583 (CGGS…WETQ), 587 to 699 (CGGI…YLTS), 705 to 812 (CGGN…YQVA), 813 to 924 (CGGE…FSAA), 928 to 1038 (CGEI…YEAT), 1044 to 1158 (CMED…WDGS), 1162 to 1274 (CGGN…YQQT), 1275 to 1386 (CRNV…WFIH), 1388 to 1503 (CGGE…WQAV), 1507 to 1616 (CGGI…FNQV), 1617 to 1731 (CGGH…YAAS), 1735 to 1847 (CGGT…FTKI), and 1849 to 1960 (GNDN…WFAV). 2 N-linked (GlcNAc...) asparagine glycosylation sites follow: N708 and N745. C757 and C775 are oxidised to a cystine. Residue N777 is glycosylated (N-linked (GlcNAc...) asparagine). C813 and C838 are oxidised to a cystine. An N-linked (GlcNAc...) asparagine glycan is attached at N853. Disulfide bonds link C865-C887 and C928-C954. N-linked (GlcNAc...) asparagine glycosylation is present at N953. E976 provides a ligand contact to Ca(2+). A glycan (N-linked (GlcNAc...) asparagine) is linked at N980. C981 and C1001 are joined by a disulfide. Ca(2+) is bound by residues D984, D1023, D1025, and L1026. C1044 and C1070 are joined by a disulfide. Residues E1092, D1102, and D1143 each coordinate Ca(2+). An intrachain disulfide couples C1099 to C1121. C1162 and C1188 are oxidised to a cystine. Residue N1165 is glycosylated (N-linked (GlcNAc...) asparagine). E1210 contacts Ca(2+). An N-linked (GlcNAc...) asparagine glycan is attached at N1214. C1215 and C1237 are joined by a disulfide. Ca(2+) contacts are provided by D1218, D1259, and Q1262. A disulfide bridge links C1275 with C1303. N-linked (GlcNAc...) asparagine glycosylation is found at N1304 and N1316. E1325 is a Ca(2+) binding site. N-linked (GlcNAc...) asparagine glycosylation is present at N1329. A disulfide bridge links C1330 with C1348. D1333, D1370, and V1372 together coordinate Ca(2+). 2 disulfides stabilise this stretch: C1388–C1414 and C1441–C1463. N1497 carries N-linked (GlcNAc...) asparagine glycosylation. A disulfide bridge connects residues C1507 and C1533. A glycan (N-linked (GlcNAc...) asparagine) is linked at N1548. 5 disulfide bridges follow: C1560-C1578, C1617-C1644, C1672-C1694, C1735-C1761, and C1788-C1809. N1643 carries N-linked (GlcNAc...) asparagine glycosylation. N-linked (GlcNAc...) asparagine glycosylation is found at N1799, N1816, and N1882. C1902 and C1924 form a disulfide bridge. N1961 carries N-linked (GlcNAc...) asparagine glycosylation. 2 disulfides stabilise this stretch: C1975–C2003 and C2029–C2051. 14 consecutive CUB domains span residues 1975 to 2088 (CGGF…FHKS), 2089 to 2210 (CGGY…YEAK), 2214 to 2331 (CGGN…YAIA), 2333 to 2445 (CGGR…FESS), 2449 to 2562 (CGGE…YTSS), 2567 to 2684 (CGGS…YSFT), 2686 to 2798 (CGGI…WNTQ), 2802 to 2916 (CGGI…FVSR), 2917 to 3032 (CGGN…YKIT), 3034 to 3147 (CGGV…FQQT), 3154 to 3271 (CGGY…YTTV), 3275 to 3392 (CGGT…IAGC), 3392 to 3504 (CNRE…WTSS), and 3508 to 3620 (CGGT…TWDS). N-linked (GlcNAc...) asparagine glycans are attached at residues N2082 and N2114. Disulfide bonds link C2089–C2115, C2214–C2244, and C2272–C2294. N2317 carries N-linked (GlcNAc...) asparagine glycosylation. Residues C2333 and C2360 are joined by a disulfide bond. N-linked (GlcNAc...) asparagine glycans are attached at residues N2383 and N2397. Disulfide bonds link C2387–C2408, C2449–C2475, and C2502–C2524. Residues N2528, N2578, N2589, and N2607 are each glycosylated (N-linked (GlcNAc...) asparagine). C2567 and C2596 form a disulfide bridge. Cystine bridges form between C2625-C2646, C2686-C2712, C2739-C2761, C2802-C2828, C2857-C2880, C2917-C2943, and C2974-C2996. The N-linked (GlcNAc...) asparagine glycan is linked to N2810. 3 N-linked (GlcNAc...) asparagine glycosylation sites follow: N2920, N2942, and N2986. The residue at position 3005 (T3005) is a Phosphothreonine. Cystine bridges form between C3034–C3061 and C3088–C3110. N-linked (GlcNAc...) asparagine glycosylation is found at N3039, N3100, and N3122. 2 disulfide bridges follow: C3154-C3182 and C3212-C3234. 3 N-linked (GlcNAc...) asparagine glycosylation sites follow: N3265, N3280, and N3292. 2 cysteine pairs are disulfide-bonded: C3275-C3303 and C3329-C3351. A glycan (N-linked (GlcNAc...) asparagine) is linked at N3354. C3392 and C3418 form a disulfide bridge. 3 N-linked (GlcNAc...) asparagine glycosylation sites follow: N3427, N3454, and N3530. 3 disulfide bridges follow: C3445–C3467, C3508–C3534, and C3561–C3583.

Interacts with AMN. Component of the cubam complex composed of one CUBN trimer and one AMN chain. The cubam complex can dimerize. Interacts with LRP2 in a dual-receptor complex in a calcium-dependent manner. Found in a complex with PID1/PCLI1, LRP1 and CUBNI. Interacts with LRP1 and PID1/PCLI1. In terms of processing, the precursor is cleaved by a trans-Golgi proteinase furin, removing a propeptide. Post-translationally, N-glycosylated. In terms of tissue distribution, detected in kidney cortex (at protein level). Detected in kidney, duodenum and jejunum.

The protein resides in the apical cell membrane. It is found in the cell membrane. It localises to the membrane. Its subcellular location is the coated pit. The protein localises to the endosome. The protein resides in the lysosome membrane. Functionally, endocytic receptor which plays a role in lipoprotein, vitamin and iron metabolism by facilitating their uptake. Acts together with LRP2 to mediate endocytosis of high-density lipoproteins, GC, hemoglobin, ALB, TF and SCGB1A1. Acts together with AMN to mediate endocytosis of the CBLIF-cobalamin complex. Binds to ALB, MB, Kappa and lambda-light chains, TF, hemoglobin, GC, SCGB1A1, APOA1, high density lipoprotein, and the CBLIF-cobalamin complex. Ligand binding requires calcium. Serves as important transporter in several absorptive epithelia, including intestine, renal proximal tubules and embryonic yolk sac. May play an important role in the development of the peri-implantation embryo through internalization of APOA1 and cholesterol. Binds to LGALS3 at the maternal-fetal interface. The protein is Cubilin (CUBN) of Canis lupus familiaris (Dog).